Here is a 204-residue protein sequence, read N- to C-terminus: Carbon disulfide hydrolase (204 aa).

Cys35, His88, and Cys91 together coordinate Zn(2+).

Belongs to the beta-class carbonic anhydrase family. In terms of assembly, forms a hexadecameric catenane homooligomer, through interactions of two interlocked octameric rings. Exists as both octamers and hexadecamers in solution. Zn(2+) serves as cofactor.

It carries out the reaction carbon disulfide + 2 H2O = 2 hydrogen sulfide + CO2 + 2 H(+). Its pathway is sulfur metabolism; hydrogen sulfide biosynthesis. Catalyzes the conversion of carbon disulfide into hydrogen sulfide and carbon dioxide, with carbonyl sulfide as an intermediate. Likely plays a key role in sulfur metabolism that allows Acidianus sp. A1-3 to grow on carbon disulfide as the main carbon and energy source. Does not show carbonic anhydrase activity (hydration of CO(2) to carbonate). The sequence is that of Carbon disulfide hydrolase from Acidianus sp. (strain A1-3).